We begin with the raw amino-acid sequence, 507 residues long: Maturase K (507 aa).

The protein belongs to the intron maturase 2 family. MatK subfamily.

The protein resides in the plastid. The protein localises to the chloroplast. Its function is as follows. Usually encoded in the trnK tRNA gene intron. Probably assists in splicing its own and other chloroplast group II introns. The sequence is that of Maturase K from Lyonia lucida (Fetterbush).